Here is a 249-residue protein sequence, read N- to C-terminus: DNA polymerase sliding clamp 1 (249 aa).

Belongs to the PCNA family. In terms of assembly, homotrimer. The subunits circularize to form a toroid; DNA passes through its center. Replication factor C (RFC) is required to load the toroid on the DNA. Interacts with TIP.

Inhibited by interaction with the PCNA inhibitor TIP. Its function is as follows. Sliding clamp subunit that acts as a moving platform for DNA processing. Responsible for tethering the catalytic subunit of DNA polymerase and other proteins to DNA during high-speed replication. The sequence is that of DNA polymerase sliding clamp 1 from Thermococcus kodakarensis (strain ATCC BAA-918 / JCM 12380 / KOD1) (Pyrococcus kodakaraensis (strain KOD1)).